A 259-amino-acid polypeptide reads, in one-letter code: Probable WRKY transcription factor 65 (259 aa).

A compositionally biased stretch (basic and acidic residues) spans 1–17; sequence MKRGLDMARSYNDHESS. 2 disordered regions span residues 1-101 and 126-165; these read MKRG…RCSS and TSEH…EEED. Residues 18–31 are compositionally biased toward polar residues; sequence QETGPESPNSSTFN. The span at 47 to 69 shows a compositional bias: basic and acidic residues; the sequence is RSVEKRVVNVPMKEMEGSRHKGD. The WRKY DNA-binding region spans 68–134; the sequence is GDTTPPSDSW…YTSEHNHPWP (67 aa). Acidic residues predominate over residues 154–165; that stretch reads EPEVEPEAEEED.

It localises to the nucleus. In terms of biological role, transcription factor. Interacts specifically with the W box (5'-(T)TGAC[CT]-3'), a frequently occurring elicitor-responsive cis-acting element. The chain is Probable WRKY transcription factor 65 (WRKY65) from Arabidopsis thaliana (Mouse-ear cress).